The following is a 587-amino-acid chain: ATP-dependent RNA helicase HAS1 (587 aa).

A compositionally biased stretch (basic residues) spans M1 to L11. The disordered stretch occupies residues M1–L103. Over residues V42–E54 the composition is skewed to basic and acidic residues. Residues E55–D69 are compositionally biased toward acidic residues. Residues Q112 to R140 carry the Q motif motif. Positions I143–Y317 constitute a Helicase ATP-binding domain. Residue A156–T163 coordinates ATP. Positions D265–D268 match the DEAD box motif. One can recognise a Helicase C-terminal domain in the interval G331 to I501. Residues G558–R587 form a disordered region.

It belongs to the DEAD box helicase family. DDX18/HAS1 subfamily. As to quaternary structure, associates in the nucleolus with the 60S and pre-60S ribosomal subunits.

The protein localises to the nucleus. The protein resides in the nucleolus. It catalyses the reaction ATP + H2O = ADP + phosphate + H(+). In terms of biological role, ATP-dependent RNA helicase involved in 40S ribosomal subunit biogenesis. Required for the processing and cleavage of 35S pre-rRNA at sites A0, A1, and A2, leading to mature 18S rRNA. The sequence is that of ATP-dependent RNA helicase HAS1 (HAS1) from Pyricularia oryzae (strain 70-15 / ATCC MYA-4617 / FGSC 8958) (Rice blast fungus).